A 510-amino-acid chain; its full sequence is MFTRVKSAVVSFMGGIMAGSSGLEHVNGSDLPVRFSYTRPEFLGLSPDEIECSADHIARPILILKETQRLPWSTGYAEVINAGKSTHNEDQASCEVVFVKKKSGVQSTPNKNSSSKRRSSLPNAEGLQLKDNQEVDGITFHYWALFDGHAGAGAAVVASKLLHHHIAEQIPDIIDILKNSAVLPPTCLGEEPESTSSNSRTLTRAASLRGGSGAPGSPSTPPTRFFTEKKIPHECLVIGALENAFKEMDLRIERERSTYSISGGCTALIVVYLLGKLYVANAGDSRAIIIRNGEIIPMSSEFTPETERQRLQYLAFLQPHLLGNEFTHLEFPRRVQRKEVGKMMLYRDFNMTGWAYKTIEENDLKFPLIYGEGKKARVMATIGVTRGLGDHDLKVHDSNIYIKPFLSSVPEVRVYDLVQHEHSADDVLVLATDGLWDVLFNEEVLEAVTSFLANCDPDDPHRYTLAAQDLVMRARGVLKDRGWRISNDRLGSGDDISVYVIPLEHGNRVS.

A PPM-type phosphatase domain is found at 73 to 503 (STGYAEVINA…DDISVYVIPL (431 aa)). 2 disordered regions span residues 105-128 (VQSTPNKNSSSKRRSSLPNAEGLQ) and 188-225 (LGEEPESTSSNSRTLTRAASLRGGSGAPGSPSTPPTRF).

The protein belongs to the PP2C family.

The protein localises to the nucleus. Its subcellular location is the cytoplasm. It carries out the reaction O-phospho-L-seryl-[protein] + H2O = L-seryl-[protein] + phosphate. The enzyme catalyses O-phospho-L-threonyl-[protein] + H2O = L-threonyl-[protein] + phosphate. The chain is Protein phosphatase 1H (ppm1h) from Xenopus tropicalis (Western clawed frog).